Here is a 385-residue protein sequence, read N- to C-terminus: MKKLSILGVTGSIGTQALDVIKKSNGELKLIGATANSSVNKMIEIIEEFNPKYVGMMDKNSADKLEKYCKERNKQTIVLSQMEGLNKIASLEEIDIVLTSLVGMIGLEPTLEAIKAKKDIALANKETLVVAGELVMSEAKKNNVKILPVDSEHSAIYQSLRGNDLKTLNKIILTASGGPFRGKKLCDLNDIGVDDALNHPKWNMGRKISIDSATLMNKGLEVIEAHWLFNCDYDNIQVVIHPQSVVHSMVEYCDGSIIAQLGAADMRLPIQYAFNYTERKNLIAKTLDFYEVAQLTFEKPDLETFKPLKLAFKAGKQGGLMPTILNGANEAAVALFLDEKIEFLDIFNIIENCMNTFEEETKKPLTLENIIELDKKVKKYVVDMK.

Positions 10, 11, 12, 13, and 124 each coordinate NADPH. A 1-deoxy-D-xylulose 5-phosphate-binding site is contributed by lysine 125. Glutamate 126 contributes to the NADPH binding site. Aspartate 150 contacts Mn(2+). 4 residues coordinate 1-deoxy-D-xylulose 5-phosphate: serine 151, glutamate 152, serine 176, and histidine 199. Residue glutamate 152 participates in Mn(2+) binding. An NADPH-binding site is contributed by glycine 205. 1-deoxy-D-xylulose 5-phosphate is bound by residues serine 212, asparagine 217, lysine 218, and glutamate 221. Glutamate 221 is a binding site for Mn(2+).

It belongs to the DXR family. It depends on Mg(2+) as a cofactor. Requires Mn(2+) as cofactor.

The catalysed reaction is 2-C-methyl-D-erythritol 4-phosphate + NADP(+) = 1-deoxy-D-xylulose 5-phosphate + NADPH + H(+). It participates in isoprenoid biosynthesis; isopentenyl diphosphate biosynthesis via DXP pathway; isopentenyl diphosphate from 1-deoxy-D-xylulose 5-phosphate: step 1/6. Catalyzes the NADPH-dependent rearrangement and reduction of 1-deoxy-D-xylulose-5-phosphate (DXP) to 2-C-methyl-D-erythritol 4-phosphate (MEP). This chain is 1-deoxy-D-xylulose 5-phosphate reductoisomerase, found in Clostridium botulinum (strain Eklund 17B / Type B).